Consider the following 404-residue polypeptide: Probable thioredoxin reductase ARB_06224 (404 aa).

The signal sequence occupies residues Met-1–Ala-22. FAD is bound at residue Asp-67 to Ala-75. Cysteines 172 and 175 form a disulfide. Asn-213 is a glycosylation site (N-linked (GlcNAc...) asparagine). Asp-334 to Gly-343 lines the FAD pocket.

Belongs to the class-II pyridine nucleotide-disulfide oxidoreductase family. In terms of assembly, homodimer. FAD serves as cofactor.

Its subcellular location is the secreted. It catalyses the reaction [thioredoxin]-dithiol + NADP(+) = [thioredoxin]-disulfide + NADPH + H(+). This chain is Probable thioredoxin reductase ARB_06224, found in Arthroderma benhamiae (strain ATCC MYA-4681 / CBS 112371) (Trichophyton mentagrophytes).